The following is a 160-amino-acid chain: Ribosome-binding factor A (160 aa).

Positions 112–122 are enriched in basic and acidic residues; that stretch reads KARQSDEKVRE. Residues 112 to 160 are disordered; that stretch reads KARQSDEKVREASAGATYAGEADPYRKPDEDETDTEGAVEADETDDTAK. The segment covering 141–160 has biased composition (acidic residues); sequence EDETDTEGAVEADETDDTAK.

This sequence belongs to the RbfA family. Monomer. Binds 30S ribosomal subunits, but not 50S ribosomal subunits or 70S ribosomes.

It is found in the cytoplasm. Its function is as follows. One of several proteins that assist in the late maturation steps of the functional core of the 30S ribosomal subunit. Associates with free 30S ribosomal subunits (but not with 30S subunits that are part of 70S ribosomes or polysomes). Required for efficient processing of 16S rRNA. May interact with the 5'-terminal helix region of 16S rRNA. The sequence is that of Ribosome-binding factor A from Streptomyces coelicolor (strain ATCC BAA-471 / A3(2) / M145).